A 264-amino-acid chain; its full sequence is 3-methyl-2-oxobutanoate hydroxymethyltransferase (264 aa).

Asp-45 and Asp-84 together coordinate Mg(2+). 3-methyl-2-oxobutanoate is bound by residues 45-46 (DS), Asp-84, and Lys-112. Glu-114 contacts Mg(2+). Glu-181 (proton acceptor) is an active-site residue.

The protein belongs to the PanB family. As to quaternary structure, homodecamer; pentamer of dimers. The cofactor is Mg(2+).

Its subcellular location is the cytoplasm. It carries out the reaction 3-methyl-2-oxobutanoate + (6R)-5,10-methylene-5,6,7,8-tetrahydrofolate + H2O = 2-dehydropantoate + (6S)-5,6,7,8-tetrahydrofolate. The protein operates within cofactor biosynthesis; (R)-pantothenate biosynthesis; (R)-pantoate from 3-methyl-2-oxobutanoate: step 1/2. In terms of biological role, catalyzes the reversible reaction in which hydroxymethyl group from 5,10-methylenetetrahydrofolate is transferred onto alpha-ketoisovalerate to form ketopantoate. The protein is 3-methyl-2-oxobutanoate hydroxymethyltransferase of Colwellia psychrerythraea (strain 34H / ATCC BAA-681) (Vibrio psychroerythus).